Here is a 72-residue protein sequence, read N- to C-terminus: Potassium channel toxin kappa-KTx 5.1 (72 aa).

The signal sequence occupies residues methionine 1–cysteine 23. The propeptide occupies aspartate 24–valine 43. 2 disulfide bridges follow: cysteine 47–cysteine 64 and cysteine 51–cysteine 60. Histidine 70 bears the Histidine amide mark.

Belongs to the short scorpion toxin superfamily. Potassium channel inhibitor kappa-KTx family. Kappa-KTx 5 subfamily. In terms of tissue distribution, expressed by the venom gland.

Its subcellular location is the secreted. Functionally, weak blocker of potassium channels Kv1.1/KCNA1 (IC(50)=578.5 nM-9.9 uM) and Kv1.6/KCNA6 (~60% block at 30 uM of toxin). Acts by binding to the pore and occluding it. Has a voltage-dependent mode of action, which can be explained by a high content of basic residues causing repulsions at higher membrane voltages. Shows a weak interaction with muscle-type nicotinic acetylcholine receptors (nAChR), since it inhibits alpha-bungarotoxin binding to muscle-type nAChR from T.californica (IC(50)=1.4 uM). This suggests it probably weakly inhibits muscle nAChR. The mode of binding to potassium channels of this toxin differs from its homologs (including HefuTx1), since it lacks the key aromatic residue of the functional dyad. In contrast, its functionally important site is composed of a number of basic residues. This Heterometrus laoticus (Thai giant scorpion) protein is Potassium channel toxin kappa-KTx 5.1.